Consider the following 680-residue polypeptide: WD repeat-containing protein 48 homolog (680 aa).

8 WD repeats span residues 26–65 (QHRNGVNALQLDANNGKLYSAGRDAIIRVWNTRTDSSEKY), 71–110 (HHNDWVNDIVLCCNGRNLISASCDTTVKVWNAQKGFCMST), 113–152 (THRDYVQALAYAKDREQVASAGLDKAIFLWDVNTLTALTA), 164–203 (GSKDSIYSLAMNPSGTVIVSGSTENILRIWDPRTCMRIMK), 206–245 (GHTENVRCLVVSPDGNQVVSGSSDGTIKVWNLGQQRCVQT), 248–287 (VHKEGVWSLLMSENFQYIISGSRDRNIIVTEMRNPSNKTL), 290–329 (EEQAPVLSLGYNIDKTGVWATTWNSDIRCWKLPMYDRCTL), and 350–389 (KGGAAIKECAVLNDKRYIITKDSQDQVVVYDVLRVVKKEQ). A disordered region spans residues 592–616 (ETTPSGGNANNSLQNSQSDANSEGS).

It belongs to the WD repeat WDR48 family. As to quaternary structure, catalytic component of the Usp12-46 deubiquitylase complex consisting of Usp12-46, Wdr20 and Uaf1; regulatory subunit that, together wtih Wdr20, stabilizes Usp12-46. The Usp12-46 deubiquitylase complex associates with arr/arrow; the interaction leads to deubiquitination and stabilization of arr/arrow.

Regulatory component of the Usp12-46 deubiquitylase complex. activates deubiquitination by increasing the catalytic turnover without increasing the affinity of deubiquitinating enzymes for the substrate. The complex deubiquitylates the wg/wingless-signaling receptor arr/arrow, which stabilizes the receptor and increases its concentration at the cell surface; this enhances the sensitivity of cells to wg/wingless-signal stimulation. This increases the amplitude and spatial range of the signaling response to the wg/wingless morphogen gradient, facilitating the precise concentration-dependent regulation of its target genes. Together with Wdr20 and Usp12-46 required for wg/wingless-mediated signaling in the wing imaginal disc and for wg/wingless-dependent regulation of intestinal stem cell proliferation. This is WD repeat-containing protein 48 homolog from Drosophila sechellia (Fruit fly).